We begin with the raw amino-acid sequence, 381 residues long: Sulfate adenylyltransferase (381 aa).

It belongs to the sulfate adenylyltransferase family.

The enzyme catalyses sulfate + ATP + H(+) = adenosine 5'-phosphosulfate + diphosphate. The protein operates within sulfur metabolism; hydrogen sulfide biosynthesis; sulfite from sulfate: step 1/3. This Chloroflexus aurantiacus (strain ATCC 29366 / DSM 635 / J-10-fl) protein is Sulfate adenylyltransferase.